The sequence spans 241 residues: Carboxy-S-adenosyl-L-methionine synthase (241 aa).

S-adenosyl-L-methionine-binding positions include Tyr-38, 63-65 (GCS), 88-89 (DN), 116-117 (DI), Asn-131, and Arg-198.

It belongs to the class I-like SAM-binding methyltransferase superfamily. Cx-SAM synthase family. In terms of assembly, homodimer.

The catalysed reaction is prephenate + S-adenosyl-L-methionine = carboxy-S-adenosyl-L-methionine + 3-phenylpyruvate + H2O. Functionally, catalyzes the conversion of S-adenosyl-L-methionine (SAM) to carboxy-S-adenosyl-L-methionine (Cx-SAM). This chain is Carboxy-S-adenosyl-L-methionine synthase, found in Haemophilus influenzae (strain ATCC 51907 / DSM 11121 / KW20 / Rd).